The following is a 464-amino-acid chain: Cysteine--tRNA ligase 1 (464 aa).

Cys-28 contacts Zn(2+). The 'HIGH' region motif lies at 30–40; sequence VTIYDLCHIGH. Residues Cys-209, His-234, and Glu-238 each contribute to the Zn(2+) site. Positions 266 to 270 match the 'KMSKS' region motif; sequence KMSKS. Residue Lys-269 coordinates ATP.

The protein belongs to the class-I aminoacyl-tRNA synthetase family. Monomer. It depends on Zn(2+) as a cofactor.

The protein localises to the cytoplasm. It catalyses the reaction tRNA(Cys) + L-cysteine + ATP = L-cysteinyl-tRNA(Cys) + AMP + diphosphate. The sequence is that of Cysteine--tRNA ligase 1 from Photobacterium profundum (strain SS9).